Reading from the N-terminus, the 952-residue chain is MVENMETSFKSIDLIQIMDKWQRKWDESKIFETKHDNREKFFISAAFPYLNGVLHAGHLRTFTIPETIARYQRMKNKNVLWTFGFHVTGTPILGLANQIKEKKEDIIWAYTNLHNIPMDELLKLDTPEAIVECFSKKATDAFKKMGFSLDWRRNFKTDDKVFSKFIEWQFYKLKDLGLIKKGSHPVRYCPKCENPVEDHDLLHGEESTTVEYNLIKFTSTFDEKDVIIPMATLRPETVFGVTNAWVNPDEIYVLAEVYDEIQKLDSEDVDLKYNGLWIVGKECADKLKEQDKNIKILKEFKGSELIGLKIKNPVTNLKVPIFPAEFVEMNIGTGCVMSVPAHAPYDYVALRDLEKVEEVGLISLIEIEGYGKYPAKEIVEKMNIKNQKDEALLEEATSKIYKDEFHKGKLNENCPEYKGTSVKDIKEKLIKDYMNFGISEIMYEFSEPKVVCRCGEKCIIKTVKGQWFITYSDENWKRLAHECIDSMEFAPENLRHEFHNKIDWMKDKACARRKGLGTKLPFDTNWMIESLSDSTIYMAYYTIARFINAGINENQLTSELFEYVFSGNGNLAEISNVSEVSIEIIEEMRKEFLYFYPLDWRCSAKDLIPNHLSFMIFNHVALFKKEHWPRGIEINGYVTIEGKKLSKSKGPVLPVLEVSETFGADVARFYITTCAELPQDADVKFKEMEKARDNLIKLYELAVLVTKEGIIEKELSIIDKWLLHKTHSSINFAEKAYEEFHLRKIGLMFYELINDLRWYKRRGGDNNGVLKEVVEIWTKLLSPVTPHLCEEIWELLGHNGFISKEIFPNVKIEYINEELELGEEFIRFTMEDIRNIKNVAKINPEKMYLYTADDWKYELLEFMNKNSEKNVKELIPIVMKEERFKRHGKDVMKLINDLMKVGVKKAIAEVEILENAKTFIEKEFECNVIIGGEDFNGKKKFAIPYKPAIYME.

The short motif at 48-58 (PYLNGVLHAGH) is the 'HIGH' region element. The 'KMSKS' region signature appears at 644–648 (KLSKS). K647 contributes to the ATP binding site.

Belongs to the class-I aminoacyl-tRNA synthetase family.

The protein resides in the cytoplasm. The enzyme catalyses tRNA(Leu) + L-leucine + ATP = L-leucyl-tRNA(Leu) + AMP + diphosphate. The protein is Leucine--tRNA ligase of Methanococcus vannielii (strain ATCC 35089 / DSM 1224 / JCM 13029 / OCM 148 / SB).